The following is a 733-amino-acid chain: Ribosomal protein S6 kinase alpha-2 (733 aa).

The Protein kinase 1 domain occupies 59-318; that stretch reads FELLKVLGQG…VEEIKRHPFF (260 aa). ATP-binding positions include 65 to 73 and lysine 91; that span reads LGQGSYGKV. Aspartate 184 acts as the Proton acceptor in catalysis. A Phosphoserine; by PDPK1 modification is found at serine 218. In terms of domain architecture, AGC-kinase C-terminal spans 319–388; sequence VTIDWNKLYR…VASSLVQEPS (70 aa). Serine 377 carries the post-translational modification Phosphoserine. A Protein kinase 2 domain is found at 415-672; the sequence is YEIKEDIGVG…AVQVLKHPWI (258 aa). Residues 421–429 and lysine 444 each bind ATP; that span reads IGVGSYSVC. The active-site Proton acceptor is aspartate 532.

Belongs to the protein kinase superfamily. AGC Ser/Thr protein kinase family. S6 kinase subfamily. Forms a complex with either MAPK1/ERK2 or MAPK3/ERK1 in quiescent cells. Transiently dissociates following mitogenic stimulation. Interacts with FBXO5; cooperate to induce the metaphase arrest of early blastomeres; increases and stabilizes interaction of FBXO5 with CDC20. It depends on Mg(2+) as a cofactor. In terms of processing, activated by phosphorylation at Ser-218 by PDPK1. Autophosphorylated on Ser-377, as part of the activation process. May be phosphorylated at Thr-356 and Ser-360 by MAPK1/ERK2 and MAPK3/ERK1. Post-translationally, N-terminal myristoylation results in an activated kinase in the absence of added growth factors.

It is found in the nucleus. The protein resides in the cytoplasm. The catalysed reaction is L-seryl-[protein] + ATP = O-phospho-L-seryl-[protein] + ADP + H(+). It carries out the reaction L-threonyl-[protein] + ATP = O-phospho-L-threonyl-[protein] + ADP + H(+). Upon extracellular signal or mitogen stimulation, phosphorylated at Thr-570 in the C-terminal kinase domain (CTKD) by MAPK1/ERK2 and MAPK3/ERK1. The activated CTKD then autophosphorylates Ser-377, allowing binding of PDPK1, which in turn phosphorylates Ser-218 in the N-terminal kinase domain (NTDK) leading to the full activation of the protein and subsequent phosphorylation of the substrates by the NTKD. Functionally, serine/threonine-protein kinase that acts downstream of ERK (MAPK1/ERK2 and MAPK3/ERK1) signaling and mediates mitogenic and stress-induced activation of transcription factors, regulates translation, and mediates cellular proliferation, survival, and differentiation. May function as tumor suppressor in epithelial ovarian cancer cells. This chain is Ribosomal protein S6 kinase alpha-2 (Rps6ka2), found in Mus musculus (Mouse).